Reading from the N-terminus, the 142-residue chain is Mitochondrial import receptor subunit TOM22 homolog (142 aa).

Residues 1–11 show a composition bias toward low complexity; that stretch reads MAAAVAAAGAG. The disordered stretch occupies residues 1–40; that stretch reads MAAAVAAAGAGEPLSPEELVPKAEAEKAEEDLEEDDDDEL. Ala-2 is modified (N-acetylalanine). Residues 2 to 82 are Cytoplasmic-facing; it reads AAAVAAAGAG…VAQKMYRFSR (81 aa). Ser-15 is modified (phosphoserine). The span at 27 to 40 shows a compositional bias: acidic residues; that stretch reads KAEEDLEEDDDDEL. Positions 41-50 are import sequence; necessary for mitochondrion outer membrane localization and integration in the TOM complex; the sequence is DETLSERLWG. Thr-43 carries the post-translational modification Phosphothreonine. Phosphoserine is present on Ser-45. Residues 83–103 form a helical membrane-spanning segment; it reads AALWIGTTSFMILVLPVVFET. Residues 83–103 are TMD; necessary for mitochondrion outer membrane localization and integration in the TOM complex; sequence AALWIGTTSFMILVLPVVFET. Over 104-142 the chain is Mitochondrial intermembrane; the sequence is EKLQMEQQQQLQQRQILLGPNTGLSGGMPGALPPLPGKI. The C-tail signal; necessary for mitochondrion outer membrane localization and integration in the TOM complex stretch occupies residues 123–142; it reads PNTGLSGGMPGALPPLPGKI.

This sequence belongs to the Tom22 family. In terms of assembly, forms part of the preprotein translocase complex of the outer mitochondrial membrane (TOM complex) which consists of at least 7 different proteins (TOMM5, TOMM6, TOMM7, TOMM20, TOMM22, TOMM40 and TOMM70). Interacts with TOMM40. Interacts with PPP2R2B.

It is found in the mitochondrion outer membrane. Central receptor component of the translocase of the outer membrane of mitochondria (TOM complex) responsible for the recognition and translocation of cytosolically synthesized mitochondrial preproteins. Together with the peripheral receptor TOM20 functions as the transit peptide receptor and facilitates the movement of preproteins into the translocation pore. Required for the translocation across the mitochondrial outer membrane of cytochrome P450 monooxygenases. In Rattus norvegicus (Rat), this protein is Mitochondrial import receptor subunit TOM22 homolog (Tomm22).